The primary structure comprises 513 residues: Cytochrome P450 705A1 (513 aa).

The chain crosses the membrane as a helical span at residues 9 to 29; the sequence is QNCFIIILLCSFSLISYFVFF. Residue Cys-448 participates in heme binding.

Belongs to the cytochrome P450 family. Heme serves as cofactor. As to expression, expressed in root stele, root cortex, root epidermis, root pericycle of the root hair zone, and quiescent center at the root meristematic zone.

The protein localises to the membrane. Cleaves the arabidiol side chain at C15 to form 14-apo-arabidiol and a side-chain fragment. Involved in the biosynthesis of the volatile homoterpene (E)-4,8-dimethyl-1,3,7-nonatriene (DMNT) in roots. Involved in the production of DMNT by degrading the triterpene arabidiol. May be involved in the defense again the fungal root pathogen Pythium irregulare by producing DMNT. The protein is Cytochrome P450 705A1 of Arabidopsis thaliana (Mouse-ear cress).